The chain runs to 188 residues: Elongation factor P-like protein (188 aa).

Belongs to the elongation factor P family.

The polypeptide is Elongation factor P-like protein (Xylella fastidiosa (strain 9a5c)).